We begin with the raw amino-acid sequence, 105 residues long: MSDSEYLTRAEAVLAAIERSLDDADADIEFERSGNVLTLEFENGTKIIVNLQPPMQEIWIAAKSGGYHFRFVDGEWRDTRNGTEFYAALSEYATQQAGEPVEIAP.

Belongs to the frataxin family.

Its function is as follows. Involved in iron-sulfur (Fe-S) cluster assembly. May act as a regulator of Fe-S biogenesis. The chain is Iron-sulfur cluster assembly protein CyaY from Paraburkholderia phymatum (strain DSM 17167 / CIP 108236 / LMG 21445 / STM815) (Burkholderia phymatum).